The primary structure comprises 515 residues: Maturase K (515 aa).

This sequence belongs to the intron maturase 2 family. MatK subfamily.

The protein resides in the plastid. Its subcellular location is the chloroplast. Usually encoded in the trnK tRNA gene intron. Probably assists in splicing its own and other chloroplast group II introns. The sequence is that of Maturase K from Pseudotsuga menziesii (Douglas-fir).